The sequence spans 331 residues: D-alanine--D-alanine ligase (331 aa).

The ATP-grasp domain maps to 116 to 316 (KRLWQTHSLP…YEDFVLQLAA (201 aa)). Position 142–197 (142–197 (ADRLGLPLIVKPAREGSSIGLTKVTSVAELPAAYEKAARLDRDVMAEQFIDGDELT)) interacts with ATP. 3 residues coordinate Mg(2+): D269, E283, and N285.

Belongs to the D-alanine--D-alanine ligase family. The cofactor is Mg(2+). Requires Mn(2+) as cofactor.

The protein resides in the cytoplasm. It carries out the reaction 2 D-alanine + ATP = D-alanyl-D-alanine + ADP + phosphate + H(+). It participates in cell wall biogenesis; peptidoglycan biosynthesis. In terms of biological role, cell wall formation. The sequence is that of D-alanine--D-alanine ligase from Ralstonia nicotianae (strain ATCC BAA-1114 / GMI1000) (Ralstonia solanacearum).